Consider the following 166-residue polypeptide: Nucleotide-binding protein SUN_0226 (166 aa).

Belongs to the YajQ family.

Its function is as follows. Nucleotide-binding protein. This Sulfurovum sp. (strain NBC37-1) protein is Nucleotide-binding protein SUN_0226.